The following is a 267-amino-acid chain: Short-chain dehydrogenase/reductase GME11361 (267 aa).

Residues Ile10, Thr36, Lys42, Asp57, Asn80, Tyr129, Lys133, Val162, and Ser164 each contribute to the NADP(+) site. Tyr129 serves as the catalytic Proton acceptor. The active-site Lowers pKa of active site Tyr is Lys133.

The protein belongs to the short-chain dehydrogenases/reductases (SDR) family.

Its pathway is secondary metabolite biosynthesis. In terms of biological role, short-chain dehydrogenase/reductase; part of the gene cluster that mediates the biosynthesis of dibenzodioxocinones such as pestalotiollide B, a novel class of inhibitors against cholesterol ester transfer protein (CEPT). The biosynthesis initiates from condensation of acetate and malonate units catalyzed by the non-reducing PKS pks8/GME11356. Pks8/GME11356 lacks a thioesterase (TE) domain, which is important to the cyclizing of the third ring of atrochrysone carboxylic acid, and the esterase GME11355 might play the role of TE and catalyzes the cyclization reaction of the C ring. The lactamase-like protein GME11357 (or other beta-lactamases in Pestalotiopsis microspora) probably hydrolyzes the thioester bond between the ACP of pks8/GME11356 and the intermediate to release atrochrysone carboxylic acid, which is spontaneously dehydrates to form endocrocin anthrone. Endocrocin anthrone is further converted to emodin via the endocrocin intermediate. Emodin is then oxidized by several enzymes such as the Baeyer-Villiger oxidase GME11358, the oxidoreductase GME11367, the short chain dehydrogenase/reductase GME11373, as well as by other oxidoreductases from the cluster, to modify the A and C rings and open the B ring, and finally yield monodictyphenone. The prenyltransferase GME11375 may catalyze the addition reaction between the C5 side chains and the carbon bone of dibenzodioxocinones. The remaining biochemical reactions to the final product dibenzodioxocinones should be methylation catalyzed by methyltransferase GME11366 and reduction and lactonization reaction catalyzed by a series of oxidordeuctases. In Pestalotiopsis microspora, this protein is Short-chain dehydrogenase/reductase GME11361.